The following is a 664-amino-acid chain: MKRRNADCSKLRRPLKRNRITEGIYGSTFLYLKFLVVWALVLLADFVVEFRFEYLWPFWLFIRSVYDSFRYQGLAFSVFFVCVAFTSNIICLLFIPIQWLFFAASTYVWVQYVWHTERGVCLPTVSLWILFVYIEAAIRFKDLKNFHVDLCRPFAAHCIGYPVVTLGFGFKSYVSYKMRLRKQKEVQKENEFYMQLLQQALPPEQQMLQKQEKEAEEAAKGLPDMDSSILIHHNGGIPANKKLSTTLPEIEYREKGKEKDKDAKKHNLGINNNNILQPVDSKIQEIEYMENHINSKRLNNDLVGSTENLLKEDSCTASSKNYKNASGVVNSSPRSHSATNGSIPSSSSKNEKKQKCTSKSPSTHKDLMENCIPNNQLSKPDALVRLEQDIKKLKADLQASRQVEQELRSQISSLSSTERGIRSEMGQLRQENELLQNKLHNAVQMKQKDKQNISQLEKKLKAEQEARSFVEKQLMEEKKRKKLEEATAARAVAFAAASRGECTETLRNRIRELEAEGKKLTMDMKVKEDQIRELELKVQELRKYKENEKDTEVLMSALSAMQDKTQHLENSLSAETRIKLDLFSALGDAKRQLEIAQGQILQKDQEIKDLKQKIAEVMAVMPSITYSAATSPLSPVSPHYSSKFVETSPSGLDPNASVYQPLKK.

4 helical membrane passes run 28–48 (TFLY…DFVV), 75–95 (AFSV…LLFI), 120–140 (VCLP…AIRF), and 154–174 (FAAH…KSYV). Over residues 253 to 265 (REKGKEKDKDAKK) the composition is skewed to basic and acidic residues. The segment at 253 to 274 (REKGKEKDKDAKKHNLGINNNN) is disordered. Phosphoserine is present on Ser-305. Positions 320–348 (KNYKNASGVVNSSPRSHSATNGSIPSSSS) are enriched in polar residues. Residues 320–375 (KNYKNASGVVNSSPRSHSATNGSIPSSSSKNEKKQKCTSKSPSTHKDLMENCIPNN) form a disordered region. The N-linked (GlcNAc...) asparagine glycan is linked to Asn-324. Ser-332 bears the Phosphoserine mark. N-linked (GlcNAc...) asparagine glycosylation is found at Asn-340 and Asn-452. Residues 630–664 (TSPLSPVSPHYSSKFVETSPSGLDPNASVYQPLKK) form a disordered region. A phosphoserine mark is found at Ser-631 and Ser-634. Asn-655 carries an N-linked (GlcNAc...) asparagine glycan.

The protein belongs to the macoilin family.

The protein localises to the rough endoplasmic reticulum membrane. Its subcellular location is the nucleus membrane. In terms of biological role, plays a role in the regulation of neuronal activity. This is Macoilin (MACO1) from Pan troglodytes (Chimpanzee).